Reading from the N-terminus, the 575-residue chain is Glycine--tRNA ligase (575 aa).

Positions 96 and 162 each coordinate substrate. ATP-binding positions include 194–196 (RNE), 204–209 (IRLREF), 327–328 (EC), and 450–453 (GIDR). 209 to 213 (FTQAE) provides a ligand contact to substrate. A substrate-binding site is contributed by 446-450 (EPSYG).

This sequence belongs to the class-II aminoacyl-tRNA synthetase family.

It localises to the cytoplasm. The enzyme catalyses tRNA(Gly) + glycine + ATP = glycyl-tRNA(Gly) + AMP + diphosphate. Its function is as follows. Catalyzes the attachment of glycine to tRNA(Gly). The protein is Glycine--tRNA ligase of Methanococcus maripaludis (strain C5 / ATCC BAA-1333).